The chain runs to 748 residues: Junctophilin-3 (748 aa).

The Cytoplasmic portion of the chain corresponds to 1–727; that stretch reads MSSGGRFNFD…LKSSTGSAPI (727 aa). MORN repeat units follow at residues 15 to 37, 39 to 60, 61 to 82, 83 to 105, 107 to 129, and 130 to 152; these read YCGGWEDGKAHGHGVCTGPKGQG, YTGSWSHGFEVLGVYTWPSGNT, YQGTWAQGKRHGIGLESKGKWV, YKGEWTHGFKGRYGVRECAGNGA, YEGTWSNGLQDGYGTETYSDGGT, and YQGQWVGGMRQGYGVRQSVPYGM. The segment at 230 to 259 is disordered; the sequence is SKSSLASQRSKQSSFRSEAGMSTVSSTASD. The span at 231–244 shows a compositional bias: low complexity; that stretch reads KSSLASQRSKQSSF. Residues 249–259 are compositionally biased toward polar residues; the sequence is GMSTVSSTASD. MORN repeat units lie at residues 288 to 310 and 311 to 333; these read YVGEWKNDKRSGFGVSQRSDGLK and YEGEWASNRRHGYGCMTFPDGTK. The interval 416–496 is disordered; sequence AKEFSPSFQH…TPPPAPAARN (81 aa). S440 carries the phosphoserine modification. The segment covering 448–457 has biased composition (polar residues); it reads STGTPLQQES. Phosphothreonine is present on T451. S457 carries the post-translational modification Phosphoserine. T471 carries the post-translational modification Phosphothreonine. Phosphoserine occurs at positions 475 and 506. Disordered regions lie at residues 526–597 and 624–649; these read CARS…SPGG and HPQKRRYSKGGACRGLGDDHRPEDRG. Residues 639 to 649 are compositionally biased toward basic and acidic residues; it reads LGDDHRPEDRG. A phosphoserine mark is found at S703 and S710. Residues 728–748 traverse the membrane as a helical; Anchor for type IV membrane protein segment; it reads LVVMVILLNIGVAILFINFFI.

This sequence belongs to the junctophilin family. In terms of tissue distribution, specifically expressed in brain.

It is found in the cell membrane. It localises to the endoplasmic reticulum membrane. Its function is as follows. Junctophilins contribute to the formation of junctional membrane complexes (JMCs) which link the plasma membrane with the endoplasmic or sarcoplasmic reticulum in excitable cells. Provides a structural foundation for functional cross-talk between the cell surface and intracellular calcium release channels. JPH3 is brain-specific and appears to have an active role in certain neurons involved in motor coordination and memory. The chain is Junctophilin-3 (JPH3) from Homo sapiens (Human).